Reading from the N-terminus, the 234-residue chain is Ribose-5-phosphate isomerase A (234 aa).

Residues 35 to 38 (SGTT), 91 to 94 (DGAD), and 105 to 108 (KGGG) contribute to the substrate site. Glutamate 114 functions as the Proton acceptor in the catalytic mechanism. Position 132 (lysine 132) interacts with substrate.

This sequence belongs to the ribose 5-phosphate isomerase family. Homodimer.

It catalyses the reaction aldehydo-D-ribose 5-phosphate = D-ribulose 5-phosphate. The protein operates within carbohydrate degradation; pentose phosphate pathway; D-ribose 5-phosphate from D-ribulose 5-phosphate (non-oxidative stage): step 1/1. In terms of biological role, catalyzes the reversible conversion of ribose-5-phosphate to ribulose 5-phosphate. This is Ribose-5-phosphate isomerase A from Methanococcus aeolicus (strain ATCC BAA-1280 / DSM 17508 / OCM 812 / Nankai-3).